Here is a 202-residue protein sequence, read N- to C-terminus: Small ribosomal subunit protein uS4c-1 (202 aa).

Residues 90-152 (MRLDNIVLRA…NKSRQLIDLN (63 aa)) form the S4 RNA-binding domain.

The protein belongs to the universal ribosomal protein uS4 family. As to quaternary structure, part of the 30S ribosomal subunit. Contacts protein S5. The interaction surface between S4 and S5 is involved in control of translational fidelity.

It localises to the plastid. Its subcellular location is the chloroplast. Its function is as follows. One of the primary rRNA binding proteins, it binds directly to 16S rRNA where it nucleates assembly of the body of the 30S subunit. In terms of biological role, with S5 and S12 plays an important role in translational accuracy. The chain is Small ribosomal subunit protein uS4c-1 from Cyanidium caldarium (Red alga).